Consider the following 210-residue polypeptide: Small ribosomal subunit protein uS7 (210 aa).

This sequence belongs to the universal ribosomal protein uS7 family. Component of the small ribosomal subunit. Part of the small subunit (SSU) processome, composed of more than 70 proteins and the RNA chaperone small nucleolar RNA (snoRNA) U3.

The protein resides in the cytoplasm. It localises to the nucleus. The protein localises to the nucleolus. Functionally, component of the small ribosomal subunit. The ribosome is a large ribonucleoprotein complex responsible for the synthesis of proteins in the cell. Part of the small subunit (SSU) processome, first precursor of the small eukaryotic ribosomal subunit. During the assembly of the SSU processome in the nucleolus, many ribosome biogenesis factors, an RNA chaperone and ribosomal proteins associate with the nascent pre-rRNA and work in concert to generate RNA folding, modifications, rearrangements and cleavage as well as targeted degradation of pre-ribosomal RNA by the RNA exosome. This is Small ribosomal subunit protein uS7 (rps-5) from Caenorhabditis elegans.